We begin with the raw amino-acid sequence, 459 residues long: Serine protease HTRA3 (459 aa).

Positions 1 to 23 are cleaved as a signal peptide; it reads MQARALLPATLATLATLAVSVLA. The 64-residue stretch at 27 to 90 folds into the IGFBP N-terminal domain; the sequence is PAAPCPARCD…ECVRGVCRCR (64 aa). Disulfide bonds link C31–C54, C35–C56, C40–C57, C45–C60, C68–C82, C76–C87, C89–C107, and C96–C132. One can recognise a Kazal-like domain in the interval 76 to 134; that stretch reads CGDSLECVRGVCRCRWTHTVCGTDGHTYADVCALQAASRRALQISGTPVRQLQKGACPS. A serine protease region spans residues 181 to 346; it reads GSGFIMSEAG…AIPSDRITRF (166 aa). Residues H197, D233, and S311 each act as charge relay system in the active site. Residues 365 to 450 enclose the PDZ domain; sequence IRMRTITPSL…EVRRGNDDLL (86 aa).

This sequence belongs to the peptidase S1C family. Homotrimer. Interacts with TGFB1; the interaction inhibits TGFB-mediated signaling. Interacts with BMP4; the interaction inhibits BMP4-mediated signaling. Interacts with TGFB2, GDF5 and MYH9. As to expression, expressed in the ovary, essentially in granulosa cells in a follicle-stage specific manner. Highest levels found in large luteinizing granulosa cells.

Its subcellular location is the secreted. In terms of biological role, serine protease that cleaves beta-casein/CSN2 as well as several extracellular matrix (ECM) proteoglycans such as decorin/DCN, biglycan/BGN and fibronectin/FN1. Inhibits signaling mediated by TGF-beta family proteins possibly indirectly by degradation of these ECM proteoglycans. May act as a tumor suppressor. Negatively regulates, in vitro, trophoblast invasion during placental development and may be involved in the development of the placenta in vivo. May also have a role in ovarian development, granulosa cell differentiation and luteinization. The protein is Serine protease HTRA3 (Htra3) of Rattus norvegicus (Rat).